Here is a 321-residue protein sequence, read N- to C-terminus: Probable arabinan endo-1,5-alpha-L-arabinosidase A (321 aa).

A signal peptide spans 1–19; sequence MHPSTFVTTIACLAGLAHG. Catalysis depends on Asp34, which acts as the Proton acceptor. Glu200 functions as the Proton donor in the catalytic mechanism.

It belongs to the glycosyl hydrolase 43 family.

The protein localises to the secreted. The catalysed reaction is Endohydrolysis of (1-&gt;5)-alpha-arabinofuranosidic linkages in (1-&gt;5)-arabinans.. The protein operates within glycan metabolism; L-arabinan degradation. Endo-1,5-alpha-L-arabinanase involved in degradation of pectin. Its preferred substrate is linear 1,5-alpha-L-arabinan. The chain is Probable arabinan endo-1,5-alpha-L-arabinosidase A (abnA) from Aspergillus clavatus (strain ATCC 1007 / CBS 513.65 / DSM 816 / NCTC 3887 / NRRL 1 / QM 1276 / 107).